Consider the following 373-residue polypeptide: P2Y purinoceptor 1 (373 aa).

Residues 1–51 (MTEVLWPAVPNGTDTAFLADPGSPWGNSTVTSTAAVASPFKCALTKTGFQF) lie on the Extracellular side of the membrane. Asparagine 11 and asparagine 27 each carry an N-linked (GlcNAc...) asparagine glycan. 2 cysteine pairs are disulfide-bonded: cysteine 42/cysteine 296 and cysteine 124/cysteine 202. Lysine 46 is an ADP binding site. A helical transmembrane segment spans residues 52–74 (YYLPAVYILVFIIGFLGNSVAIW). The Cytoplasmic portion of the chain corresponds to 75–87 (MFVFHMKPWSGIS). The chain crosses the membrane as a helical span at residues 88–109 (VYMFNLALADFLYVLTLPALIF). At 110 to 125 (YYFNKTDWIFGDAMCK) the chain is on the extracellular side. N-linked (GlcNAc...) asparagine glycosylation is present at asparagine 113. Residues 126 to 147 (LQRFIFHVNLYGSILFLTCISA) traverse the membrane as a helical segment. Residues 148 to 166 (HRYSGVVYPLKSLGRLKKK) lie on the Cytoplasmic side of the membrane. Residues 167–188 (NAVYISVLVWLIVVVGISPILF) form a helical membrane-spanning segment. Residues 189-214 (YSGTGIRKNKTITCYDTTSDEYLRSY) are Extracellular-facing. Residue asparagine 197 is glycosylated (N-linked (GlcNAc...) asparagine). 203 to 205 (YDT) serves as a coordination point for ADP. Residues 215 to 237 (FIYSMCTTVAMFCVPLVLILGCY) traverse the membrane as a helical segment. Over 238–260 (GLIVRALIYKDLDNSPLRRKSIY) the chain is Cytoplasmic. A helical membrane pass occupies residues 261–284 (LVIIVLTVFAVSYIPFHVMKTMNL). ADP is bound by residues 283-287 (NLRAR), 303-306 (YATY), and arginine 310. Residues 285 to 303 (RARLDFQTPEMCAFNDRVY) lie on the Extracellular side of the membrane. The chain crosses the membrane as a helical span at residues 304 to 325 (ATYQVTRGLASLNSCVDPILYF). The Cytoplasmic segment spans residues 326 to 373 (LAGDTFRRRLSRATRKASRRSEANLQSKSEDMTLNILSEFKQNGDTSL).

This sequence belongs to the G-protein coupled receptor 1 family.

The protein resides in the cell membrane. Functionally, receptor for extracellular adenine nucleotides such as ADP. In platelets, binding to ADP leads to mobilization of intracellular calcium ions via activation of phospholipase C, a change in platelet shape, and ultimately platelet aggregation. The polypeptide is P2Y purinoceptor 1 (P2RY1) (Bos taurus (Bovine)).